Here is a 34-residue protein sequence, read N- to C-terminus: Turripeptide Pal9a (34 aa).

Cystine bridges form between C3–C17, C8–C19, and C13–C30. Q34 carries the glutamine amide modification.

As to expression, expressed by the venom duct.

It is found in the secreted. This Polystira albida (White giant-turris) protein is Turripeptide Pal9a.